Reading from the N-terminus, the 348-residue chain is Fructose-1,6-bisphosphatase class 1 2 (348 aa).

Residues Glu-93, Asp-117, Leu-119, and Asp-120 each coordinate Mg(2+). Substrate is bound by residues 120–123, Asn-213, Tyr-244, and Lys-274; that span reads DGSS. Mg(2+) is bound at residue Glu-280.

Belongs to the FBPase class 1 family. Homotetramer. Mg(2+) serves as cofactor.

The protein resides in the cytoplasm. It carries out the reaction beta-D-fructose 1,6-bisphosphate + H2O = beta-D-fructose 6-phosphate + phosphate. It participates in carbohydrate biosynthesis; gluconeogenesis. This chain is Fructose-1,6-bisphosphatase class 1 2, found in Christiangramia forsetii (strain DSM 17595 / CGMCC 1.15422 / KT0803) (Gramella forsetii).